Consider the following 626-residue polypeptide: Chaperone protein HtpG (626 aa).

The segment at 1–339 (MSQNQETRGF…SNDLPLNVSR (339 aa)) is a; substrate-binding. The b stretch occupies residues 340-555 (EILQDNKITA…NDQMTTQMAK (216 aa)). The c stretch occupies residues 556 to 626 (LFAAAGQPVP…FIKRINKLLG (71 aa)).

The protein belongs to the heat shock protein 90 family. As to quaternary structure, homodimer.

It is found in the cytoplasm. Molecular chaperone. Has ATPase activity. In Haemophilus influenzae (strain 86-028NP), this protein is Chaperone protein HtpG.